The chain runs to 243 residues: UDP-2,3-diacylglucosamine hydrolase (243 aa).

Mn(2+)-binding residues include Asp-9, His-11, Asp-42, Asn-79, and His-114. Residue 79-80 (NR) coordinates substrate. The substrate site is built by Asp-122, Ser-160, Asn-164, and His-195. Mn(2+) is bound by residues His-195 and His-197.

This sequence belongs to the LpxH family. The cofactor is Mn(2+).

It is found in the cell inner membrane. It carries out the reaction UDP-2-N,3-O-bis[(3R)-3-hydroxytetradecanoyl]-alpha-D-glucosamine + H2O = 2-N,3-O-bis[(3R)-3-hydroxytetradecanoyl]-alpha-D-glucosaminyl 1-phosphate + UMP + 2 H(+). It functions in the pathway glycolipid biosynthesis; lipid IV(A) biosynthesis; lipid IV(A) from (3R)-3-hydroxytetradecanoyl-[acyl-carrier-protein] and UDP-N-acetyl-alpha-D-glucosamine: step 4/6. Functionally, hydrolyzes the pyrophosphate bond of UDP-2,3-diacylglucosamine to yield 2,3-diacylglucosamine 1-phosphate (lipid X) and UMP by catalyzing the attack of water at the alpha-P atom. Involved in the biosynthesis of lipid A, a phosphorylated glycolipid that anchors the lipopolysaccharide to the outer membrane of the cell. The polypeptide is UDP-2,3-diacylglucosamine hydrolase (Coxiella burnetii (strain RSA 331 / Henzerling II)).